The chain runs to 633 residues: Terminal nucleotidyltransferase 4B (633 aa).

Residues 1–115 (MFRSGERPLG…GGGRADGGGG (115 aa)) form a disordered region. Positions 25-34 (ETTNNNNNHH) are enriched in polar residues. 2 stretches are compositionally biased toward low complexity: residues 36–52 (PAAW…ASPV) and 60–70 (RPAAALPASES). The segment covering 87–98 (ASTYGLNYSLLQ) has biased composition (polar residues). The segment covering 103–115 (RAAGGGRADGGGG) has biased composition (gly residues). Residues aspartate 191 and aspartate 193 each contribute to the Mg(2+) site. Positions 254, 279, 297, 298, 382, and 386 each coordinate ATP. Residues 322–382 (NYGVLLIEFF…YIEDPLQPGN (61 aa)) enclose the PAP-associated domain. Residues 484 to 633 (LGKCRSNASE…RDAPLSELCR (150 aa)) are disordered. Over residues 492 to 519 (SEPLSKHSSNSSSGPVSSSSATQSSSSD) the composition is skewed to low complexity. Lysine 531 participates in a covalent cross-link: Glycyl lysine isopeptide (Lys-Gly) (interchain with G-Cter in SUMO2). Residues 542–552 (RVGSQDVSLEV) are compositionally biased toward polar residues. Phosphoserine is present on serine 545. Glycyl lysine isopeptide (Lys-Gly) (interchain with G-Cter in SUMO2) cross-links involve residues lysine 558, lysine 573, and lysine 587. Residues 559–614 (MQSTQTTNTPNNANKSQHGSARLFRSSSKGFQGTAQTSHGALMTSKQHQGKSNTQY) show a composition bias toward polar residues. The Basic, involved in binding of the RNA primer motif lies at 618 to 624 (KKRRHKR).

Belongs to the DNA polymerase type-B-like family. Component of a nucleolar TRAMP-like complex, an ATP-dependent exosome regulatory complex consisting of a helicase (MTREX), an oligadenylate polymerase (TENT4B or TENT4A), and a substrate specific RNA-binding factor (ZCCHC7 or ZCCHC8). Several TRAMP-like complexes exist with specific compositions and are associated with nuclear, or nucleolar RNA exosomes. Mg(2+) is required as a cofactor. Requires Mn(2+) as cofactor.

The protein resides in the nucleus. It is found in the nucleolus. The protein localises to the cytoplasm. It catalyses the reaction RNA(n) + ATP = RNA(n)-3'-adenine ribonucleotide + diphosphate. Its function is as follows. Terminal nucleotidyltransferase that catalyzes preferentially the transfer of ATP and GTP on RNA 3' poly(A) tail creating a heterogeneous 3' poly(A) tail leading to mRNAs stabilization by protecting mRNAs from active deadenylation. Also functions as a catalytic subunit of a TRAMP-like complex which has a poly(A) RNA polymerase activity and is involved in a post-transcriptional quality control mechanism. Polyadenylation with short oligo(A) tails is required for the degradative activity of the exosome on several of its nuclear RNA substrates. Doesn't need a cofactor for polyadenylation activity (in vitro). Plays a role in replication-dependent histone mRNA degradation, probably through terminal uridylation of mature histone mRNAs. May play a role in sister chromatid cohesion. The sequence is that of Terminal nucleotidyltransferase 4B from Mus musculus (Mouse).